The chain runs to 372 residues: Serine proteinase inhibitor 1 (372 aa).

Belongs to the serpin family. Poxviruses subfamily.

The protein localises to the host cytoplasm. Its function is as follows. Plays a role in mediating viral host range. May act to inhibit a caspase independent form of apoptosis to allow efficient virus replication in infected cells. This is Serine proteinase inhibitor 1 (OPG208) from Homo sapiens (Human).